The sequence spans 136 residues: Frataxin, mitochondrial (136 aa).

This sequence belongs to the frataxin family. As to quaternary structure, monomer. Oligomer.

The protein localises to the mitochondrion. It carries out the reaction 4 Fe(2+) + O2 + 4 H(+) = 4 Fe(3+) + 2 H2O. Its function is as follows. Promotes the biosynthesis of heme as well as the assembly and repair of iron-sulfur clusters by delivering Fe(2+) to proteins involved in these pathways. May play a role in the protection against iron-catalyzed oxidative stress through its ability to catalyze the oxidation of Fe(2+) to Fe(3+). May be able to store large amounts of the metal in the form of a ferrihydrite mineral by oligomerization. This is Frataxin, mitochondrial (frh-1) from Caenorhabditis elegans.